Consider the following 444-residue polypeptide: Glutamyl-tRNA reductase (444 aa).

Residues threonine 49–arginine 52, serine 109, glutamate 114–glutamine 116, and glutamine 120 contribute to the substrate site. Cysteine 50 serves as the catalytic Nucleophile. Position 189–194 (glycine 189–glycine 194) interacts with NADP(+).

Belongs to the glutamyl-tRNA reductase family. In terms of assembly, homodimer.

The enzyme catalyses (S)-4-amino-5-oxopentanoate + tRNA(Glu) + NADP(+) = L-glutamyl-tRNA(Glu) + NADPH + H(+). It functions in the pathway porphyrin-containing compound metabolism; protoporphyrin-IX biosynthesis; 5-aminolevulinate from L-glutamyl-tRNA(Glu): step 1/2. In terms of biological role, catalyzes the NADPH-dependent reduction of glutamyl-tRNA(Glu) to glutamate 1-semialdehyde (GSA). This Bacillus cereus (strain G9842) protein is Glutamyl-tRNA reductase.